The chain runs to 174 residues: ATP-dependent protease subunit HslV (174 aa).

The active site involves T2. 3 residues coordinate Na(+): G157, C160, and T163.

It belongs to the peptidase T1B family. HslV subfamily. A double ring-shaped homohexamer of HslV is capped on each side by a ring-shaped HslU homohexamer. The assembly of the HslU/HslV complex is dependent on binding of ATP.

Its subcellular location is the cytoplasm. It catalyses the reaction ATP-dependent cleavage of peptide bonds with broad specificity.. With respect to regulation, allosterically activated by HslU binding. Protease subunit of a proteasome-like degradation complex believed to be a general protein degrading machinery. This Yersinia pseudotuberculosis serotype I (strain IP32953) protein is ATP-dependent protease subunit HslV.